The primary structure comprises 335 residues: Tetraacyldisaccharide 4'-kinase (335 aa).

Position 59-66 (59-66 (TAGGNGKT)) interacts with ATP.

Belongs to the LpxK family.

The enzyme catalyses a lipid A disaccharide + ATP = a lipid IVA + ADP + H(+). The protein operates within glycolipid biosynthesis; lipid IV(A) biosynthesis; lipid IV(A) from (3R)-3-hydroxytetradecanoyl-[acyl-carrier-protein] and UDP-N-acetyl-alpha-D-glucosamine: step 6/6. In terms of biological role, transfers the gamma-phosphate of ATP to the 4'-position of a tetraacyldisaccharide 1-phosphate intermediate (termed DS-1-P) to form tetraacyldisaccharide 1,4'-bis-phosphate (lipid IVA). The chain is Tetraacyldisaccharide 4'-kinase from Vibrio parahaemolyticus serotype O3:K6 (strain RIMD 2210633).